The following is a 227-amino-acid chain: Pyridoxine/pyridoxamine 5'-phosphate oxidase (227 aa).

Substrate is bound by residues 23-26 (RREY) and Lys81. FMN-binding positions include 76 to 81 (RIVLLK), 91 to 92 (YT), Arg97, Lys98, and Gln120. Tyr138, Arg142, and Ser146 together coordinate substrate. FMN-binding positions include 155-156 (QS) and Trp200. 206-208 (RLH) is a substrate binding site. Arg210 serves as a coordination point for FMN.

It belongs to the pyridoxamine 5'-phosphate oxidase family. In terms of assembly, homodimer. Requires FMN as cofactor.

The catalysed reaction is pyridoxamine 5'-phosphate + O2 + H2O = pyridoxal 5'-phosphate + H2O2 + NH4(+). It catalyses the reaction pyridoxine 5'-phosphate + O2 = pyridoxal 5'-phosphate + H2O2. It participates in cofactor metabolism; pyridoxal 5'-phosphate salvage; pyridoxal 5'-phosphate from pyridoxamine 5'-phosphate: step 1/1. Its pathway is cofactor metabolism; pyridoxal 5'-phosphate salvage; pyridoxal 5'-phosphate from pyridoxine 5'-phosphate: step 1/1. In terms of biological role, catalyzes the oxidation of either pyridoxine 5'-phosphate (PNP) or pyridoxamine 5'-phosphate (PMP) into pyridoxal 5'-phosphate (PLP). The chain is Pyridoxine/pyridoxamine 5'-phosphate oxidase from Pectobacterium atrosepticum (strain SCRI 1043 / ATCC BAA-672) (Erwinia carotovora subsp. atroseptica).